The following is a 252-amino-acid chain: 5-oxoprolinase subunit A (252 aa).

Belongs to the LamB/PxpA family. As to quaternary structure, forms a complex composed of PxpA, PxpB and PxpC.

The enzyme catalyses 5-oxo-L-proline + ATP + 2 H2O = L-glutamate + ADP + phosphate + H(+). In terms of biological role, catalyzes the cleavage of 5-oxoproline to form L-glutamate coupled to the hydrolysis of ATP to ADP and inorganic phosphate. The polypeptide is 5-oxoprolinase subunit A (Photorhabdus laumondii subsp. laumondii (strain DSM 15139 / CIP 105565 / TT01) (Photorhabdus luminescens subsp. laumondii)).